The sequence spans 396 residues: NADH-quinone oxidoreductase subunit D (396 aa).

Belongs to the complex I 49 kDa subunit family. As to quaternary structure, NDH-1 is composed of 14 different subunits. Subunits NuoB, C, D, E, F, and G constitute the peripheral sector of the complex.

Its subcellular location is the cell inner membrane. The enzyme catalyses a quinone + NADH + 5 H(+)(in) = a quinol + NAD(+) + 4 H(+)(out). In terms of biological role, NDH-1 shuttles electrons from NADH, via FMN and iron-sulfur (Fe-S) centers, to quinones in the respiratory chain. The immediate electron acceptor for the enzyme in this species is believed to be ubiquinone. Couples the redox reaction to proton translocation (for every two electrons transferred, four hydrogen ions are translocated across the cytoplasmic membrane), and thus conserves the redox energy in a proton gradient. The polypeptide is NADH-quinone oxidoreductase subunit D (Methylobacterium radiotolerans (strain ATCC 27329 / DSM 1819 / JCM 2831 / NBRC 15690 / NCIMB 10815 / 0-1)).